We begin with the raw amino-acid sequence, 90 residues long: Arminin 7722 (90 aa).

An N-terminal signal peptide occupies residues 1–18; it reads MRSASLILFVAIVALTYA. Positions 19–59 are excised as a propeptide; it reads RSYEDIKEEIRNEVENEILDDLEEENDELDDNAQEVSDPRA. The residue at position 87 (Thr-87) is a Threonine amide.

The protein belongs to the arminin family. As to expression, expressed in entodermal epithelium along the body column.

Its subcellular location is the secreted. The protein localises to the target cell membrane. Its function is as follows. Antimicrobial peptide with a broad-spectrum antimicrobial activity. Keeps its antibacterial activity under a wide range of salt concentrations that mimic physiological conditions of human blood, which is surprising, since Hydra is an obligate freshwater animal with nearly no salt tolerance. Does not affect red blood cells. The sequence is that of Arminin 7722 from Hydra vulgaris (Hydra).